A 1000-amino-acid chain; its full sequence is MAERKPNGGSGGASTSSSGTNLLFSSSATEFSFNVPFIPVTQASASPASLLLPGEDSTDVGEEDSFLGQTSIHTSAPQTFSYFSQVSSSSDPFGNIGQSPLTTAATSVGQSGFPKPLTALPFTTGSQDVSNAFSPSISKAQPGAPPSSLMGINSYLPSQPSSLPPSYFGNQPQGIPQPGYNPYRHTPGSSRANPYIAPPQLQQCQTPGPPAHPPPSGPPVQMYQMPPGSLPPVPSSVQSPAQQQVPARPGAPSVQVPSPFLLQNQYEPVQPHWFYCKEVEYKQLWMPFSVFDSLNLEEIYNSVQPDPESVVLGTDGGRYDVYLYDRIRKAAYWEEEPAEVRRCTWFYKGDTDSRFIPYTEEFSEKLEAEYKKAVTTNQWHRRLEFPSGETIVMHNPKVIVQFQPSSVPDEWGTTQDGQTRPRVVKRGIDDNLDEIPDGEMPQVDHLVFVVHGIGPVCDLRFRSIIECVDDFRVVSLKLLRTHFKKSLDDGKVSRVEFLPVHWHSSLGGDATGVDRNIKKITLPSIGRFRHFTNETLLDILFYNSPTYCQTIVEKVGMEINHLHALFMSRNPDFKGGVSVAGHSLGSLILFDILSNQKDLNLSKCPGPLAVANGVVKQLHFQEKQMPEEPKLTLDESYDLVVENKEVLTLQETLEALSLSEYFSTFEKEKIDMESLLMCTVDDLKEMGIPLGPRKKIANFVEHKAAKLKKAASEKKAVAATSTKGQEQSAQKTKDMASLPSESNEPKRKLPVGACVSSVCVNYESFEVGAGQVSVAYNSLDFEPEIFFALGSPIAMFLTIRGVDRIDENYSLPTCKGFFNIYHPLDPVAYRLEPMIVPDLDLKAVLIPHHKGRKRLHLELKESLSRMGSDLKQGFISSLKSAWQTLNEFARAHTSSTQLQEELEKVANQIKEEEEKQVVEAEKVVESPDFSKDEDYLGKVGMLNGGRRIDYVLQEKPIESFNEYLFALQSHLCYWESEDTALLLLKEIYRTMNISPEQPQH.

The interval 1–367 (MAERKPNGGS…YTEEFSEKLE (367 aa)) is interaction with SEC23A. A disordered region spans residues 133-252 (FSPSISKAQP…QQVPARPGAP (120 aa)). The segment covering 154 to 167 (SYLPSQPSSLPPSY) has biased composition (low complexity). A compositionally biased stretch (pro residues) spans 207-218 (PGPPAHPPPSGP). Residues 235–246 (SSVQSPAQQQVP) show a composition bias toward low complexity. Residues 644-707 (KEVLTLQETL…NFVEHKAAKL (64 aa)) enclose the SAM domain. The interval 716–748 (AVAATSTKGQEQSAQKTKDMASLPSESNEPKRK) is disordered. Phosphoserine is present on residues Ser737 and Ser926. Positions 779–989 (LDFEPEIFFA…ALLLLKEIYR (211 aa)) constitute a DDHD domain.

The protein belongs to the PA-PLA1 family. As to quaternary structure, interacts with SEC23A. As to expression, ubiquitously expressed with stronger levels detected in heart, liver and skeletal muscle.

Its subcellular location is the cytoplasmic vesicle. The protein localises to the COPII-coated vesicle membrane. The protein resides in the endoplasmic reticulum. Plays a role in the organization of endoplasmic reticulum exit sites. Specifically binds to phosphatidylinositol 3-phosphate (PI(3)P), phosphatidylinositol 4-phosphate (PI(4)P) and phosphatidylinositol 5-phosphate (PI(5)P). The sequence is that of SEC23-interacting protein (SEC23IP) from Homo sapiens (Human).